The sequence spans 273 residues: MQILKSVSELLEFRNNCGGSVGFVPTMGALHNGHATLIKNSVSQNDDTIVSVFVNPTQFLPGEDLEKYPRNQSGDIKICELCGASALFFPNADEIYSKDEPLIIAPKRISTILEGATRPGHFDGVCMVLNKLFNLVSPTRAYFGKKDSQQLVIVQNMVKRFFLNLEIVPCDIVRESDGLALSSRNSYLNDDELCYALKLSRSLMRASNLIKANELNSNIIKSSMSECLEPLKVDYIAVVDRNFEPIENVEIGNSIILVAAYVGKTRLIDNIWI.

Residue 27-34 participates in ATP binding; it reads MGALHNGH. The Proton donor role is filled by histidine 34. A (R)-pantoate-binding site is contributed by glutamine 58. Position 58 (glutamine 58) interacts with beta-alanine. Residue 144–147 coordinates ATP; the sequence is GKKD. Residue glutamine 150 participates in (R)-pantoate binding. ATP contacts are provided by residues valine 173 and 181 to 184; that span reads LSSR.

The protein belongs to the pantothenate synthetase family. In terms of assembly, homodimer.

It localises to the cytoplasm. It catalyses the reaction (R)-pantoate + beta-alanine + ATP = (R)-pantothenate + AMP + diphosphate + H(+). The protein operates within cofactor biosynthesis; (R)-pantothenate biosynthesis; (R)-pantothenate from (R)-pantoate and beta-alanine: step 1/1. In terms of biological role, catalyzes the condensation of pantoate with beta-alanine in an ATP-dependent reaction via a pantoyl-adenylate intermediate. The sequence is that of Pantothenate synthetase from Campylobacter fetus subsp. fetus (strain 82-40).